The following is a 401-amino-acid chain: Ribosomal RNA dihydrouridine synthase (401 aa).

Residues A15, D34, N35, R41, G47, N52, V132, E371, and F384 each contribute to the FAD site.

This sequence belongs to the BaiN/RdsA family. RdsA subfamily. It depends on FAD as a cofactor.

It carries out the reaction a 5,6-dihydrouridine in mRNA + NAD(+) = a uridine in mRNA + NADH + H(+). Functionally, catalyzes the synthesis of 5,6-dihydrouridine (D) at position 2449 in 23S rRNA. This is Ribosomal RNA dihydrouridine synthase from Haemophilus influenzae (strain ATCC 51907 / DSM 11121 / KW20 / Rd).